We begin with the raw amino-acid sequence, 134 residues long: Small ribosomal subunit protein uS9c (134 aa).

The interval 105-134 is disordered; it reads QGYLTRNPLRKERKKYGLKKARKAPQFSKR. The segment covering 115–134 has biased composition (basic residues); the sequence is KERKKYGLKKARKAPQFSKR.

This sequence belongs to the universal ribosomal protein uS9 family.

It is found in the plastid. The protein localises to the chloroplast. In Nephroselmis olivacea (Green alga), this protein is Small ribosomal subunit protein uS9c (rps9).